The sequence spans 460 residues: NADH-ubiquinone oxidoreductase chain 4 (460 aa).

13 helical membrane-spanning segments follow: residues 22-42 (WLWPTTLLHSLLIALASLSWL), 61-81 (PLSTPLLILSCWLLPLMILAS), 97-114 (YISLLTSLQFFLILAFSA), 118-140 (IMFYVMFEVTLIPTLILITRWGN), 149-169 (TYFLFYTLAGSLPLLVALLLL), 196-216 (IWWTGCILAFLVKMPLYGVHL), 226-246 (PIAGSMILAAVLLKLGGYGMM), 259-279 (LSYPFIILALWGVIMTGSICM), 286-305 (SLIAYSSVSHMGLVVGGILI), 309-331 (WGFTGALILMIAHGLTSSALFCL), 352-372 (MALPLMTAWWFIASLANLALP), 395-415 (IALTGLGMLITAGYSLYMFLM), and 437-457 (LLIALHLLPLLLLILKPELIW).

This sequence belongs to the complex I subunit 4 family.

The protein resides in the mitochondrion membrane. The catalysed reaction is a ubiquinone + NADH + 5 H(+)(in) = a ubiquinol + NAD(+) + 4 H(+)(out). In terms of biological role, core subunit of the mitochondrial membrane respiratory chain NADH dehydrogenase (Complex I) that is believed to belong to the minimal assembly required for catalysis. Complex I functions in the transfer of electrons from NADH to the respiratory chain. The immediate electron acceptor for the enzyme is believed to be ubiquinone. This is NADH-ubiquinone oxidoreductase chain 4 (MT-ND4) from Tetraodon nigroviridis (Spotted green pufferfish).